Here is an 84-residue protein sequence, read N- to C-terminus: Protein myomixer (84 aa).

Residues 1-4 lie on the Cytoplasmic side of the membrane; it reads MPTP. A helical transmembrane segment spans residues 5-25; that stretch reads LLPLLLRLLLSCLLLPAARLA. At 26–84 the chain is on the extracellular side; it reads RQYLLPLLRRLARRLGSQDMREALLGCLLFILSQRHSPDAGEASRVDRLERRERLGPQK. The short motif at 48–57 is the AxLyCxL element; it reads ALLGCLLFIL. Residues 62-84 form a disordered region; the sequence is SPDAGEASRVDRLERRERLGPQK.

The protein belongs to the MYMX family. Interacts with MYMK.

The protein resides in the cell membrane. In terms of biological role, myoblast-specific protein that mediates myoblast fusion, an essential step for the formation of multi-nucleated muscle fibers. Involved in membrane fusion downstream of the lipid mixing step mediated by MYMK. Acts by generating membrane stresses via its extracellular C-terminus, leading to drive fusion pore formation. Acts independently of MYMK. Involved in skeletal muscle regeneration in response to injury by mediating the fusion of satellite cells, a population of muscle stem cells, with injured myofibers. The protein is Protein myomixer of Homo sapiens (Human).